The sequence spans 377 residues: Protein-arginine rhamnosyltransferase (377 aa).

Tyr-15 serves as a coordination point for dTDP-beta-L-rhamnose. The active-site Proton acceptor is the Asp-17. Residues Tyr-193, Gln-255, and 271–275 (RGEDS) each bind dTDP-beta-L-rhamnose. Glu-273 is an active-site residue.

Belongs to the glycosyltransferase 104 family.

The enzyme catalyses dTDP-beta-L-rhamnose + L-arginyl-[protein] = N(omega)-(alpha-L-rhamnosyl)-L-arginyl-[protein] + dTDP + H(+). Protein-arginine rhamnosyltransferase that catalyzes the transfer of a single rhamnose to elongation factor P (EF-P) on 'Lys-32', a modification required for EF-P-dependent rescue of polyproline stalled ribosomes. The chain is Protein-arginine rhamnosyltransferase from Pseudomonas putida (strain ATCC 47054 / DSM 6125 / CFBP 8728 / NCIMB 11950 / KT2440).